The chain runs to 160 residues: Prostaglandin E synthase 3 (160 aa).

In terms of domain architecture, CS spans 1 to 90 (MQPASAKWYD…ESGQSWPRLT (90 aa)). Lys-33 carries the post-translational modification N6-acetyllysine. A Glycyl lysine isopeptide (Lys-Gly) (interchain with G-Cter in SUMO2) cross-link involves residue Lys-35. Phosphoserine is present on Ser-44. Lys-65 participates in a covalent cross-link: Glycyl lysine isopeptide (Lys-Gly) (interchain with G-Cter in SUMO2). 6 positions are modified to phosphoserine: Ser-85, Ser-100, Ser-113, Ser-118, Ser-148, and Ser-151. The disordered stretch occupies residues 124 to 160 (SEMMNNMGGDEDVDLPEVDGADDDSQDSDDEKMPDLE). Residues 132-153 (GDEDVDLPEVDGADDDSQDSDD) show a composition bias toward acidic residues. The PXLE motif motif lies at 157–160 (PDLE).

The protein belongs to the p23/wos2 family. Probably forms a complex composed of chaperones HSP90 and HSP70, co-chaperones STIP1/HOP, CDC37, PPP5C, PTGES3/p23, TSC1 and client protein TSC2. Binds to the progesterone receptor. Interacts with TERT; the interaction, together with HSP90AA1, is required for correct assembly and stabilization of the telomerase holoenzyme complex. Interacts (via PXLE motif) with EGLN1/PHD2, recruiting EGLN1/PHD2 to the HSP90 pathway to facilitate HIF alpha proteins hydroxylation. Interacts with HSP90AA1, FLCN, FNIP1 and FNIP2. Post-translationally, proteolytically cleaved by caspase-7 (CASP7) in response to apoptosis, leading to its inactivation. As to expression, detected in testis and ovary, at lower levels in endometrium, myometrium, kidney and lung, and only faintly in spleen, heart and muscle (at protein level). Expressed at high levels in glandular and luminal epithelial cells of the endometrium, but also detected in stromal cells (at protein level).

It is found in the cytoplasm. The enzyme catalyses prostaglandin H2 = prostaglandin E2. Its pathway is lipid metabolism; prostaglandin biosynthesis. Cytosolic prostaglandin synthase that catalyzes the oxidoreduction of prostaglandin endoperoxide H2 (PGH2) to prostaglandin E2 (PGE2). Molecular chaperone that localizes to genomic response elements in a hormone-dependent manner and disrupts receptor-mediated transcriptional activation, by promoting disassembly of transcriptional regulatory complexes. Facilitates HIF alpha proteins hydroxylation via interaction with EGLN1/PHD2, leading to recruit EGLN1/PHD2 to the HSP90 pathway. This chain is Prostaglandin E synthase 3 (PTGES3), found in Bos taurus (Bovine).